A 1401-amino-acid polypeptide reads, in one-letter code: Lysine-specific demethylase 6A (1401 aa).

The tract at residues 1 to 1095 (MKSCGVSLAT…TNIDLSDDKK (1095 aa)) is interaction with SUPT6H. TPR repeat units follow at residues 95 to 128 (SDFF…QSDY), 132 to 165 (AAFL…DPSF), 169 to 203 (KEIH…NPCT), 207 to 240 (AEIQ…ENLS), 245 to 285 (ATIL…DPNS), 286 to 319 (GQSW…SEAS), 321 to 353 (DTWC…DHGH), and 355 to 387 (AAWM…KNCS). A compositionally biased stretch (polar residues) spans 439 to 453 (AMNTAQQNTSDNWSG). Positions 439-463 (AMNTAQQNTSDNWSGGNAPPPVEQQ) are disordered. Omega-N-methylarginine occurs at positions 519 and 549. 3 stretches are compositionally biased toward polar residues: residues 596–606 (NHVTGSGSNGN), 619–642 (HNRT…STQG), and 660–743 (LSST…STAS). The tract at residues 596–745 (NHVTGSGSNG…ETPNSTASVE (150 aa)) is disordered. Ser769 is subject to Phosphoserine. Disordered stretches follow at residues 795–863 (GTCD…EESQ), 914–941 (LLDK…PPTP), and 1043–1080 (FQES…GPFK). Low complexity predominate over residues 814 to 833 (SVASSPSSAISTATPSPKST). Position 827 is a phosphothreonine (Thr827). Ser829 carries the post-translational modification Phosphoserine. Positions 834–848 (EQTTTNSVTSLNSPH) are enriched in polar residues. Pro residues predominate over residues 918 to 931 (CPPPRPPSSPYPPL). Basic and acidic residues predominate over residues 1046–1063 (SLREENEKRSHHKDHSDS). Residues 1095–1258 (KWKLQLHELT…YKLAVERYEW (164 aa)) form the JmjC domain. 3 residues coordinate Fe cation: His1146, Glu1148, and His1226. Zn(2+) contacts are provided by Cys1331, Cys1334, Cys1358, and Cys1361.

Belongs to the UTX family. As to quaternary structure, component of the MLL2/3 complex (also named ASCOM complex), at least composed of KMT2D/MLL2 or KMT2C/MLL3, ASH2L, RBBP5, WDR5, NCOA6, DPY30, KDM6A (or KDM6B), PAXIP1/PTIP, PAGR1 and alpha- and beta-tubulin. Interacts with TLE1. Interacts with SUPT6H. Interacts with SMARCA4. Interacts with PROSER1. L-ascorbate is required as a cofactor. Fe(2+) serves as cofactor. As to expression, expressed in brain, heart and spleen.

It localises to the nucleus. It carries out the reaction N(6),N(6),N(6)-trimethyl-L-lysyl(27)-[histone H3] + 2 2-oxoglutarate + 2 O2 = N(6)-methyl-L-lysyl(27)-[histone H3] + 2 formaldehyde + 2 succinate + 2 CO2. In terms of biological role, histone demethylase that specifically demethylates 'Lys-27' of histone H3, thereby playing a central role in histone code. Demethylates trimethylated and dimethylated but not monomethylated H3 'Lys-27'. Plays a central role in regulation of posterior development, by regulating HOX gene expression. Demethylation of 'Lys-27' of histone H3 is concomitant with methylation of 'Lys-4' of histone H3, and regulates the recruitment of the PRC1 complex and monoubiquitination of histone H2A. Plays a demethylase-independent role in chromatin remodeling to regulate T-box family member-dependent gene expression. The polypeptide is Lysine-specific demethylase 6A (Kdm6a) (Mus musculus (Mouse)).